A 358-amino-acid polypeptide reads, in one-letter code: Probable branched-chain-amino-acid aminotransferase (358 aa).

Position 196 is an N6-(pyridoxal phosphate)lysine (lysine 196).

This sequence belongs to the class-IV pyridoxal-phosphate-dependent aminotransferase family. Pyridoxal 5'-phosphate serves as cofactor.

The enzyme catalyses L-leucine + 2-oxoglutarate = 4-methyl-2-oxopentanoate + L-glutamate. The catalysed reaction is L-isoleucine + 2-oxoglutarate = (S)-3-methyl-2-oxopentanoate + L-glutamate. It carries out the reaction L-valine + 2-oxoglutarate = 3-methyl-2-oxobutanoate + L-glutamate. Its pathway is amino-acid biosynthesis; L-isoleucine biosynthesis; L-isoleucine from 2-oxobutanoate: step 4/4. The protein operates within amino-acid biosynthesis; L-leucine biosynthesis; L-leucine from 3-methyl-2-oxobutanoate: step 4/4. It participates in amino-acid biosynthesis; L-valine biosynthesis; L-valine from pyruvate: step 4/4. Acts on leucine, isoleucine and valine. The sequence is that of Probable branched-chain-amino-acid aminotransferase (ilvE) from Staphylococcus aureus (strain MRSA252).